The sequence spans 751 residues: Cytosolic neutral trehalase (751 aa).

Over residues 1–15 the composition is skewed to polar residues; that stretch reads MDDSALPSNTSNGIN. Disordered regions lie at residues 1–42 and 64–88; these read MDDS…NPES and DFHE…NPRK. Positions 64–78 are enriched in basic and acidic residues; sequence DFHEMLGDRNTRRGS. Positions 105, 107, 109, 111, and 116 each coordinate Ca(2+). Residues arginine 292, 299–300, asparagine 336, 345–347, glutamate 412, arginine 461, and glycine 464 contribute to the substrate site; these read WD and RSQ. Residues aspartate 466 and glutamate 670 each act as proton donor/acceptor in the active site.

Belongs to the glycosyl hydrolase 37 family. Ca(2+) is required as a cofactor.

Its subcellular location is the cytoplasm. It catalyses the reaction alpha,alpha-trehalose + H2O = alpha-D-glucose + beta-D-glucose. Its pathway is carbohydrate degradation. Activated by calcium. Its function is as follows. Hydrolyzes intracellular trehalose to glucose. The disaccharide trehalose serves as a storage carbohydrate that is mobilized during conidial germination. Regulates the level of trehalose as a protectant for cell integrity during heat stress. This chain is Cytosolic neutral trehalase, found in Emericella nidulans (strain FGSC A4 / ATCC 38163 / CBS 112.46 / NRRL 194 / M139) (Aspergillus nidulans).